The sequence spans 450 residues: UDP-N-acetylglucosamine--peptide N-acetylglucosaminyltransferase stabilizing protein GtfB (450 aa).

This sequence belongs to the GtfB family. In terms of assembly, forms a heterotetramer with 2 subunits each of GtfA and GtfB. Part of the accessory SecA2/SecY2 protein translocation apparatus required to export cell wall protein GspB.

Its subcellular location is the cell membrane. It participates in protein modification; protein glycosylation. In terms of biological role, required for polymorphic O-glycosylation of GspB, a serine-rich repeat cell wall protein encoded upstream in the same operon. A substrate-binding protein that is part of the accessory SecA2/SecY2 system specifically required to export GspB. The GtfA-GtfB complex adds GlcNAc from UDP-GlcNAc to GspB, attaching the first sugar residue. Upon coexpression in E.coli with GtfA glycosylates GspB constructs. Binds the GspB protein substrate; alone this subunit only recognizes partially glycosylated GspB, but is constrained by GtfA to also recognize unglycosylated protein. The enzyme probably modifies its tertiary conformation by opening and closing its intersubunit interfaces to accomodate the increasingly glycosylated substrate. In Streptococcus gordonii, this protein is UDP-N-acetylglucosamine--peptide N-acetylglucosaminyltransferase stabilizing protein GtfB.